Here is a 383-residue protein sequence, read N- to C-terminus: N-acetyldiaminopimelate deacetylase (383 aa).

Residue aspartate 72 is part of the active site. Residue glutamate 131 is the Proton acceptor of the active site.

Belongs to the peptidase M20A family. N-acetyldiaminopimelate deacetylase subfamily.

The enzyme catalyses N-acetyl-(2S,6S)-2,6-diaminopimelate + H2O = (2S,6S)-2,6-diaminopimelate + acetate. Its pathway is amino-acid biosynthesis; L-lysine biosynthesis via DAP pathway; LL-2,6-diaminopimelate from (S)-tetrahydrodipicolinate (acetylase route): step 3/3. Catalyzes the conversion of N-acetyl-diaminopimelate to diaminopimelate and acetate. The chain is N-acetyldiaminopimelate deacetylase from Lacticaseibacillus paracasei (strain ATCC 334 / BCRC 17002 / CCUG 31169 / CIP 107868 / KCTC 3260 / NRRL B-441) (Lactobacillus paracasei).